The chain runs to 72 residues: Gas vesicle protein A (72 aa).

The protein belongs to the gas vesicle GvpA family. In terms of assembly, the gas vesicle shell is 2 nm thick and consists of a single layer of this protein. It forms helical ribs nearly perpendicular to the long axis of the vesicle.

Its subcellular location is the gas vesicle shell. Functionally, gas vesicles are hollow, gas filled proteinaceous nanostructures found in some microorganisms. During planktonic growth they allow positioning of the organism at a favorable depth for light or nutrient acquisition. GvpA forms the protein shell. In Synechococcus sp. (strain JA-3-3Ab) (Cyanobacteria bacterium Yellowstone A-Prime), this protein is Gas vesicle protein A.